A 593-amino-acid polypeptide reads, in one-letter code: SPI-1 type 3 secretion system translocon protein SctE (593 aa).

2 coiled-coil regions span residues 151–208 (DTAK…ATDA) and 287–314 (EGRQAEMEKKSAEFQEETRKAEETNRIM). 2 consecutive transmembrane segments (helical) span residues 330 to 350 (VVAAVFTGGASLALAAVGLAV) and 409 to 429 (IVGAIVAAIAMVAVIVVVAVV).

It belongs to the SctE/SipB/YopB family. The core secretion machinery of the T3SS is composed of approximately 20 different proteins, including cytoplasmic components, a base, an export apparatus and a needle. This subunit is involved in the formation of a pore, called the translocon, in host membrane.

It localises to the secreted. The protein resides in the host membrane. In terms of biological role, component of the type III secretion system 1 (SPI-1 T3SS), also called injectisome, which is used to inject bacterial effector proteins into eukaryotic host cells. SipB/SctE1 and SipC/SctB are inserted into the host membrane where they form a pore and allow the translocation of effector proteins into the cytosol of target cells. In Salmonella dublin, this protein is SPI-1 type 3 secretion system translocon protein SctE.